The chain runs to 478 residues: Glutamate--tRNA ligase (478 aa).

Positions 8–18 (PSPTGYLHLGN) match the 'HIGH' region motif. The 'KMSKS' region motif lies at 248 to 252 (KLSKR). Lysine 251 is a binding site for ATP.

This sequence belongs to the class-I aminoacyl-tRNA synthetase family. Glutamate--tRNA ligase type 1 subfamily. In terms of assembly, monomer.

The protein resides in the cytoplasm. The catalysed reaction is tRNA(Glu) + L-glutamate + ATP = L-glutamyl-tRNA(Glu) + AMP + diphosphate. Its function is as follows. Catalyzes the attachment of glutamate to tRNA(Glu) in a two-step reaction: glutamate is first activated by ATP to form Glu-AMP and then transferred to the acceptor end of tRNA(Glu). The sequence is that of Glutamate--tRNA ligase from Sulfurihydrogenibium sp. (strain YO3AOP1).